The chain runs to 284 residues: Phosphate import ATP-binding protein PstB 2 (284 aa).

Residues 1-22 (MTLLSTLRGISSPARQQPGTQS) are compositionally biased toward polar residues. The tract at residues 1–29 (MTLLSTLRGISSPARQQPGTQSESRRGGD) is disordered. Positions 36 to 278 (LAVAGVSHGF…PDDARARKFI (243 aa)) constitute an ABC transporter domain. ATP is bound at residue 68 to 75 (GPSGTGKT).

Belongs to the ABC transporter superfamily. Phosphate importer (TC 3.A.1.7) family. The complex is composed of two ATP-binding proteins (PstB), two transmembrane proteins (PstC and PstA) and a solute-binding protein (PstS).

The protein resides in the cell membrane. The catalysed reaction is phosphate(out) + ATP + H2O = ADP + 2 phosphate(in) + H(+). In terms of biological role, part of the ABC transporter complex PstSACB involved in phosphate import. Responsible for energy coupling to the transport system. This chain is Phosphate import ATP-binding protein PstB 2, found in Natronomonas pharaonis (strain ATCC 35678 / DSM 2160 / CIP 103997 / JCM 8858 / NBRC 14720 / NCIMB 2260 / Gabara) (Halobacterium pharaonis).